A 161-amino-acid polypeptide reads, in one-letter code: Cystatin cpi-2 (161 aa).

A signal peptide spans 1-25 (MMSTMSIKEGLLVILLSLFLFDTTA). Positions 76-78 (SND) match the Important for interaction with host LGMN motif. Asn-89 carries N-linked (GlcNAc...) asparagine glycosylation. A Secondary area of contact motif is present at residues 93–97 (QVVAG). A disulfide bridge links Cys-111 with Cys-124.

This sequence belongs to the cystatin family.

Functionally, cysteine protease inhibitor which inhibits members of the peptidase C1 family. Also acts as an asparaginyl endopeptidase inhibitor. In the human host, inhibits CTSL/cathepsin L, CTSS/cathepsin S, CTSB/cathepsin B and asparaginyl endopeptidase LGMN/AEP which may cause defects in both antigen and MHC class II invariant chain CD74/Ii processing. The polypeptide is Cystatin cpi-2 (Brugia malayi (Filarial nematode worm)).